A 147-amino-acid polypeptide reads, in one-letter code: uncharacterized protein (147 aa).

The protein belongs to the limonene-1,2-epoxide hydrolase family.

This is an uncharacterized protein from Bacillus subtilis (strain 168).